Here is a 256-residue protein sequence, read N- to C-terminus: 5'-nucleotidase SurE (256 aa).

A divalent metal cation is bound by residues Asp8, Asp9, Ser40, and Asn92.

This sequence belongs to the SurE nucleotidase family. A divalent metal cation is required as a cofactor.

The protein resides in the cytoplasm. It carries out the reaction a ribonucleoside 5'-phosphate + H2O = a ribonucleoside + phosphate. Functionally, nucleotidase that shows phosphatase activity on nucleoside 5'-monophosphates. The polypeptide is 5'-nucleotidase SurE (Allorhizobium ampelinum (strain ATCC BAA-846 / DSM 112012 / S4) (Agrobacterium vitis (strain S4))).